The chain runs to 483 residues: Regulatory protein ViaA (483 aa).

It belongs to the ViaA family. As to quaternary structure, homodimer. Interacts with RavA.

The protein localises to the cytoplasm. Functionally, component of the RavA-ViaA chaperone complex, which may act on the membrane to optimize the function of some of the respiratory chains. ViaA stimulates the ATPase activity of RavA. In Salmonella dublin (strain CT_02021853), this protein is Regulatory protein ViaA.